Reading from the N-terminus, the 239-residue chain is DnaA regulatory inactivator Hda (239 aa).

This sequence belongs to the DnaA family. HdA subfamily. As to quaternary structure, the active form seems to be an ADP-bound monomer. Forms the RIDA complex (regulatory inactivation of DnaA) of ATP-DnaA, ADP-Hda and the DNA-loaded beta sliding clamp (dnaN).

In terms of biological role, mediates the interaction of DNA replication initiator protein DnaA with DNA polymerase subunit beta sliding clamp (dnaN). Stimulates hydrolysis of ATP-DnaA to ADP-DnaA, rendering DnaA inactive for reinitiation, a process called regulatory inhibition of DnaA or RIDA. This is DnaA regulatory inactivator Hda from Yersinia enterocolitica serotype O:8 / biotype 1B (strain NCTC 13174 / 8081).